A 325-amino-acid polypeptide reads, in one-letter code: MKPILLQGHERSITQIKYNREGDLLFTVAKDPIVNVWYSVNGERLGTYMGHTGAVWCVDADWDTKHVLTGSADNSCRLWDCETGKQLALLKTNSAVRTCGFDFGGNIIMFSTDKQMGYQCFVSFFDLRDPSQIDNNEPYMKIPCNDSKITSAVWGPLGECIIAGHESGELNQYSAKSGEVLVNVKEHSRQINDIQLSRDMTMFVTASKDNTAKLFDSTTLEHQKTFRTERPVNSAALSPNYDHVVLGGGQEAMDVTTTSTRIGKFEARFFHLAFEEEFGRVKGHFGPINSVAFHPDGKSYSSGGEDGYVRIHYFDPQYFEFEFEA.

5 WD repeats span residues 1–39 (MKPI…VWYS), 43–81 (ERLG…LWDC), 87–127 (LALL…FFDL), 135–175 (NNEP…QYSA), and 180–217 (VLVN…LFDS). Residue Thr-219 is modified to Phosphothreonine. 2 WD repeats span residues 221 to 267 (EHQK…KFEA) and 275 to 316 (EEEF…YFDP). Position 264 is an N6-acetyllysine (Lys-264). Lys-282 is covalently cross-linked (Glycyl lysine isopeptide (Lys-Gly) (interchain with G-Cter in ubiquitin)). Position 308 is a phosphotyrosine (Tyr-308).

In terms of assembly, component of the eukaryotic translation initiation factor 3 (eIF-3) complex, which is composed of 13 subunits: EIF3A, EIF3B, EIF3C, EIF3D, EIF3E, EIF3F, EIF3G, EIF3H, EIF3I, EIF3J, EIF3K, EIF3L and EIF3M. The eIF-3 complex appears to include 3 stable modules: module A is composed of EIF3A, EIF3B, EIF3G and EIF3I; module B is composed of EIF3F, EIF3H, and EIF3M; and module C is composed of EIF3C, EIF3D, EIF3E, EIF3K and EIF3L. EIF3C of module C binds EIF3B of module A and EIF3H of module B, thereby linking the three modules. EIF3J is a labile subunit that binds to the eIF-3 complex via EIF3B. The eIF-3 complex interacts with RPS6KB1 under conditions of nutrient depletion. Mitogenic stimulation leads to binding and activation of a complex composed of MTOR and RPTOR, leading to phosphorylation and release of RPS6KB1 and binding of EIF4B to eIF-3. Phosphorylated by TGF-beta type II receptor.

The protein resides in the cytoplasm. Component of the eukaryotic translation initiation factor 3 (eIF-3) complex, which is required for several steps in the initiation of protein synthesis. The eIF-3 complex associates with the 40S ribosome and facilitates the recruitment of eIF-1, eIF-1A, eIF-2:GTP:methionyl-tRNAi and eIF-5 to form the 43S pre-initiation complex (43S PIC). The eIF-3 complex stimulates mRNA recruitment to the 43S PIC and scanning of the mRNA for AUG recognition. The eIF-3 complex is also required for disassembly and recycling of post-termination ribosomal complexes and subsequently prevents premature joining of the 40S and 60S ribosomal subunits prior to initiation. The eIF-3 complex specifically targets and initiates translation of a subset of mRNAs involved in cell proliferation, including cell cycling, differentiation and apoptosis, and uses different modes of RNA stem-loop binding to exert either translational activation or repression. This chain is Eukaryotic translation initiation factor 3 subunit I, found in Homo sapiens (Human).